A 318-amino-acid polypeptide reads, in one-letter code: UDP-N-acetylenolpyruvoylglucosamine reductase (318 aa).

An FAD-binding PCMH-type domain is found at 38-204 (IGGICPVVVE…LGIEILLKEG (167 aa)). The active site involves arginine 182. The tract at residues 212 to 232 (SLKDKRDRRNSSQPENKKSAG) is disordered. Residues 213-229 (LKDKRDRRNSSQPENKK) are compositionally biased toward basic and acidic residues. Serine 233 (proton donor) is an active-site residue. Glutamate 310 is an active-site residue.

Belongs to the MurB family. FAD serves as cofactor.

The protein resides in the cytoplasm. The catalysed reaction is UDP-N-acetyl-alpha-D-muramate + NADP(+) = UDP-N-acetyl-3-O-(1-carboxyvinyl)-alpha-D-glucosamine + NADPH + H(+). It participates in cell wall biogenesis; peptidoglycan biosynthesis. Its function is as follows. Cell wall formation. The protein is UDP-N-acetylenolpyruvoylglucosamine reductase of Leptospira borgpetersenii serovar Hardjo-bovis (strain L550).